The sequence spans 457 residues: Mesentericin Y105 secretion protein MesE (457 aa).

Residues 22 to 42 traverse the membrane as a helical segment; the sequence is TLIIVPIFLLVVFIVLFSLFA.

The protein belongs to the membrane fusion protein (MFP) (TC 8.A.1) family.

Its subcellular location is the membrane. Functionally, involved in the secretion of mesentericin Y105. In Leuconostoc mesenteroides, this protein is Mesentericin Y105 secretion protein MesE (mesE).